We begin with the raw amino-acid sequence, 615 residues long: Pre-hexon-linking protein IIIa (615 aa).

The interval 1 to 92 (MDPGLKPSSS…DLLIRVHKYN (92 aa)) is peripentonal hexon-tethering domain. The binding to hexon-linking protein stretch occupies residues 124 to 238 (SNQVILNDFL…FTNENTFTPD (115 aa)). Ser-212 bears the Phosphoserine; by host mark. Thr-262 is subject to Phosphothreonine; by host. Residues 400-409 (EREALEEAGP) are compositionally biased toward basic and acidic residues. Disordered stretches follow at residues 400 to 473 (EREA…SVDS) and 528 to 615 (GERI…NGLK). 2 stretches are compositionally biased toward low complexity: residues 419–430 (PSSSPQSSKIQS) and 451–460 (SVRSAPPSVS). At Ser-451 the chain carries Phosphoserine; by host. Over residues 539–548 (RAEIERRRIA) the composition is skewed to basic and acidic residues. The span at 557-570 (PSLSSESSAPSLSS) shows a compositional bias: low complexity. Residues 602–615 (GNPFDYLRPRNGLK) constitute a propeptide that is removed on maturation.

This sequence belongs to the adenoviridae hexon-linking protein IIIa family. Interacts with hexon proteins; this interaction tethers the peripentonal hexons to hexons situated in the facet. Interacts with the penton protein (via N-terminus). Interacts with packaging protein 3; this interaction is required to promote correct genome packaging. In terms of processing, cleaved near the C-terminus by the viral protease during virion maturation to form the mature protein.

It localises to the virion. Its subcellular location is the host nucleus. Functionally, structural component of the virion that acts as a cement protein on the capsid exterior which mediates the interactions between the hexons, including the peripentonal hexons, and reaches all the way to the penton vertices. Two hexon linking proteins IIIa, one from each facet, stabilize the unique edge interface between a pair of facets. As the virus enters the host cell, hexon linking proteins IIIa are shed concomitant with virion acidification in the endosome. During virus assembly, seems to play a role in the serotype specificity of the packaging of viral DNA via its interaction with packaging protein 3. This is Pre-hexon-linking protein IIIa from Snake adenovirus serotype 1 (SnAdV-1).